The chain runs to 514 residues: Acetylcholine receptor subunit gamma (514 aa).

An N-terminal signal peptide occupies residues 1 to 22 (MRCSDLLLLFLLALCVLPGISC). Residues 23-241 (RNQEEKLLQD…VIFYLIIQRK (219 aa)) are Extracellular-facing. Cys150 and Cys164 are oxidised to a cystine. Asn163 carries N-linked (GlcNAc...) asparagine glycosylation. Transmembrane regions (helical) follow at residues 242–266 (PLFYIINIIVPCVLISSMAVLVYFL), 275–293 (CTVSINVLLAQTVFLFLIA), and 309–330 (YLTFLMVVTVVIVVNAVIVLNV). Residues 331–473 (SLRTPNTHSM…WILVGRVIDR (143 aa)) are Cytoplasmic-facing. Tyr386 carries the phosphotyrosine; by Tyr-kinases modification. A helical transmembrane segment spans residues 474-494 (VCFFIMASLFVCGTIGIFLMA).

Belongs to the ligand-gated ion channel (TC 1.A.9) family. Acetylcholine receptor (TC 1.A.9.1) subfamily. Gamma/CHRNG sub-subfamily. As to quaternary structure, pentamer of two alpha chains, and one each of the beta, delta, and gamma chains.

The protein localises to the postsynaptic cell membrane. The protein resides in the cell membrane. It catalyses the reaction K(+)(in) = K(+)(out). It carries out the reaction Na(+)(in) = Na(+)(out). Its function is as follows. After binding acetylcholine, the AChR responds by an extensive change in conformation that affects all subunits and leads to opening of an ion-conducting channel across the plasma membrane. The sequence is that of Acetylcholine receptor subunit gamma (CHRNG) from Gallus gallus (Chicken).